We begin with the raw amino-acid sequence, 230 residues long: MAKADLDKDPFDVASMFDDVGKNYDLTNTVLSFGQDRVWRKRTRQRLDLKPGEKVLDLAAGTAVSTVELAKSGAFCVACDFSQGMLAAGKDRDVSKVVGDGMQLPFADNSFDAVTISYGLRNIHDFRAGLKEMARVTKPGGRLTVAEFSTPVIPVFGTVYKEYLMRLLPQVARAVSSNPEAYIYLADSIRAWPSQAELAREINQNGWSDCGWQNLTFGIVALHSAIKPEN.

S-adenosyl-L-methionine-binding positions include threonine 62, aspartate 80, 100–101 (DG), and serine 117.

This sequence belongs to the class I-like SAM-binding methyltransferase superfamily. MenG/UbiE family.

It carries out the reaction a 2-demethylmenaquinol + S-adenosyl-L-methionine = a menaquinol + S-adenosyl-L-homocysteine + H(+). It functions in the pathway quinol/quinone metabolism; menaquinone biosynthesis; menaquinol from 1,4-dihydroxy-2-naphthoate: step 2/2. In terms of biological role, methyltransferase required for the conversion of demethylmenaquinol (DMKH2) to menaquinol (MKH2). The protein is Demethylmenaquinone methyltransferase of Corynebacterium glutamicum (strain R).